Reading from the N-terminus, the 287-residue chain is Protein TMEPAI (287 aa).

Residues Met-1–Glu-40 are Lumenal-facing. Residues Phe-41–Ser-63 form a helical membrane-spanning segment. Topologically, residues His-64 to Leu-287 are cytoplasmic. A PPxY motif 1 motif is present at residues Pro-158 to Tyr-161. An SMAD interaction motif (SIM) motif is present at residues Pro-186–Arg-189. Residues Pro-229–Tyr-232 carry the PPxY motif 2 motif. A disordered region spans residues Tyr-239–Gly-258. The span at Ser-242–Pro-252 shows a compositional bias: polar residues.

It belongs to the PMEPA1 family. In terms of assembly, interacts with NEDD4 (via PPxY motifs). Interacts with AR. Interacts with LDLRAD4. Interacts (via the SMAD interaction motif) with SMAD2 and SMAD3. As to expression, highest expression in prostate. Also expressed in ovary.

The protein localises to the early endosome membrane. It localises to the golgi apparatus membrane. Its function is as follows. Functions as a negative regulator of TGF-beta signaling and thereby probably plays a role in cell proliferation, differentiation, apoptosis, motility, extracellular matrix production and immunosuppression. In the canonical TGF-beta pathway, ZFYVE9/SARA recruits the intracellular signal transducer and transcriptional modulators SMAD2 and SMAD3 to the TGF-beta receptor. Phosphorylated by the receptor, SMAD2 and SMAD3 then form a heteromeric complex with SMAD4 that translocates to the nucleus to regulate transcription. Through interaction with SMAD2 and SMAD3, LDLRAD4 may compete with ZFYVE9 and SMAD4 and prevent propagation of the intracellular signal. Also involved in down-regulation of the androgen receptor (AR), enhancing ubiquitination and proteasome-mediated degradation of AR, probably by recruiting NEDD4. The polypeptide is Protein TMEPAI (PMEPA1) (Homo sapiens (Human)).